Reading from the N-terminus, the 315-residue chain is B3 domain-containing protein At1g05920 (315 aa).

Positions 24–129 (MISRDNQKKT…PQVASVPKSV (106 aa)) are disordered. Composition is skewed to basic and acidic residues over residues 39-51 (VREE…EEMI), 66-83 (KEGK…DNRT), and 100-114 (FDHV…HAYL). Positions 204–306 (INTVIQNDFL…ILCFALVPPT (103 aa)) form a DNA-binding region, TF-B3.

It localises to the nucleus. This Arabidopsis thaliana (Mouse-ear cress) protein is B3 domain-containing protein At1g05920.